A 232-amino-acid chain; its full sequence is Ubiquinone biosynthesis O-methyltransferase (232 aa).

Residues Arg36, Gly55, Asp76, and Leu120 each contribute to the S-adenosyl-L-methionine site.

The protein belongs to the methyltransferase superfamily. UbiG/COQ3 family.

It carries out the reaction a 3-demethylubiquinol + S-adenosyl-L-methionine = a ubiquinol + S-adenosyl-L-homocysteine + H(+). It catalyses the reaction a 3-(all-trans-polyprenyl)benzene-1,2-diol + S-adenosyl-L-methionine = a 2-methoxy-6-(all-trans-polyprenyl)phenol + S-adenosyl-L-homocysteine + H(+). Its pathway is cofactor biosynthesis; ubiquinone biosynthesis. Its function is as follows. O-methyltransferase that catalyzes the 2 O-methylation steps in the ubiquinone biosynthetic pathway. This chain is Ubiquinone biosynthesis O-methyltransferase, found in Pseudomonas fluorescens (strain SBW25).